The primary structure comprises 320 residues: o-succinylbenzoate synthase (320 aa).

Residue Lys-133 is the Proton donor of the active site. Residues Asp-161, Glu-190, and Asp-213 each coordinate Mg(2+). Lys-235 serves as the catalytic Proton acceptor.

The protein belongs to the mandelate racemase/muconate lactonizing enzyme family. MenC type 1 subfamily. It depends on a divalent metal cation as a cofactor.

The catalysed reaction is (1R,6R)-6-hydroxy-2-succinyl-cyclohexa-2,4-diene-1-carboxylate = 2-succinylbenzoate + H2O. It functions in the pathway quinol/quinone metabolism; 1,4-dihydroxy-2-naphthoate biosynthesis; 1,4-dihydroxy-2-naphthoate from chorismate: step 4/7. The protein operates within quinol/quinone metabolism; menaquinone biosynthesis. Functionally, converts 2-succinyl-6-hydroxy-2,4-cyclohexadiene-1-carboxylate (SHCHC) to 2-succinylbenzoate (OSB). The protein is o-succinylbenzoate synthase of Escherichia coli O45:K1 (strain S88 / ExPEC).